We begin with the raw amino-acid sequence, 115 residues long: Probable 4-amino-4-deoxy-L-arabinose-phosphoundecaprenol flippase subunit ArnE (115 aa).

A run of 4 helical transmembrane segments spans residues 1–21, 43–63, 65–85, and 93–113; these read MIVG…GQLC, WLAL…NVLQ, LPLS…TLAA, and TTAR…LMSI. The 70-residue stretch at 44-113 folds into the EamA domain; sequence LALAVLLLGL…IMLGILLMSI (70 aa).

Belongs to the ArnE family. As to quaternary structure, heterodimer of ArnE and ArnF.

The protein resides in the cell inner membrane. It functions in the pathway bacterial outer membrane biogenesis; lipopolysaccharide biosynthesis. In terms of biological role, translocates 4-amino-4-deoxy-L-arabinose-phosphoundecaprenol (alpha-L-Ara4N-phosphoundecaprenol) from the cytoplasmic to the periplasmic side of the inner membrane. This Serratia proteamaculans (strain 568) protein is Probable 4-amino-4-deoxy-L-arabinose-phosphoundecaprenol flippase subunit ArnE.